The following is a 462-amino-acid chain: Glycine--tRNA ligase (462 aa).

Residues Arg98 and Glu174 each coordinate substrate. Residues Arg206–Glu208, Phe216–Phe221, Glu290–Leu291, and Gly334–Arg337 each bind ATP. Position 221 to 225 (Phe221 to Glu225) interacts with substrate. Substrate is bound at residue Glu330–Gly334.

The protein belongs to the class-II aminoacyl-tRNA synthetase family. In terms of assembly, homodimer.

It localises to the cytoplasm. The enzyme catalyses tRNA(Gly) + glycine + ATP = glycyl-tRNA(Gly) + AMP + diphosphate. Its function is as follows. Catalyzes the attachment of glycine to tRNA(Gly). The polypeptide is Glycine--tRNA ligase (Lachnospira eligens (strain ATCC 27750 / DSM 3376 / VPI C15-48 / C15-B4) (Eubacterium eligens)).